Here is a 497-residue protein sequence, read N- to C-terminus: Ammonium transporter Rh type C (497 aa).

Topologically, residues 1–9 are cytoplasmic; that stretch reads MAWNTNLRG. A helical transmembrane segment spans residues 10–30; sequence RLPITCLILQVTMVVLFGVFV. At 31 to 61 the chain is on the extracellular side; that stretch reads RYDIQADAHWWLEKKRKNISSDVENEFYYRY. Asn48 is a glycosylation site (N-linked (GlcNAc...) asparagine). A helical membrane pass occupies residues 62–82; it reads PSFEDVHAMVFVGFGFLMTYL. Over 83–93 the chain is Cytoplasmic; it reads QRYGFSAVGFN. A helical transmembrane segment spans residues 94-114; that stretch reads FLLAAFGIQWALLMQGWFHFF. Residues 115–125 lie on the Extracellular side of the membrane; the sequence is EEGHILLSVEN. Residues 126 to 145 form a helical membrane-spanning segment; the sequence is LIQADFCVASTCVAFGAVLG. Topologically, residues 146–151 are cytoplasmic; sequence KISPMQ. Residues 152 to 174 traverse the membrane as a helical segment; that stretch reads LLIMTFFQVTLFTVNEFILLNLI. Residues 175-179 lie on the Extracellular side of the membrane; that stretch reads EAKDA. A helical transmembrane segment spans residues 180–200; sequence GGSMTIHTFGAYFGLTVTWIL. Over 201–219 the chain is Cytoplasmic; the sequence is YRKNLEQSKQRQSSVYHSD. A helical transmembrane segment spans residues 220-240; the sequence is LFAMIGTLFLWIYWPSFNSAS. At 241–251 the chain is on the extracellular side; it reads SFHGDTQHRAA. A helical transmembrane segment spans residues 252–272; that stretch reads LNTYLSLAASVLTTVAVSSVI. Topologically, residues 273 to 282 are cytoplasmic; it reads HKKGKLDMVH. Residues 283 to 303 traverse the membrane as a helical segment; it reads IQNATLAGGVGVGTAAEMMLT. Residue Pro304 is a topological domain, extracellular. A helical membrane pass occupies residues 305-325; the sequence is YGALIVGFFCGILSTLGFAYL. Topologically, residues 326–340 are cytoplasmic; sequence SPFLESRLRIQDTCG. A helical transmembrane segment spans residues 341–361; that stretch reads IHNLHGIPGIIGGIVGAVTAA. At 362 to 395 the chain is on the extracellular side; it reads YSSPDVYGEPGIVHSFGFGGYKADWTKRMQGRSQ. A helical membrane pass occupies residues 396–416; the sequence is IFGLLLSLAMALVGGIIVGFI. The Cytoplasmic portion of the chain corresponds to 417–497; that stretch reads LKLPFWGQAS…ATVTSSSLVH (81 aa).

It belongs to the ammonium transporter (TC 2.A.49) family. Rh subfamily. Homotrimer. Post-translationally, N-glycosylated. As to expression, expressed by connecting tubule cells and intercalated cells of the collecting duct in kidney (at protein level).

Its subcellular location is the cell membrane. The protein localises to the apical cell membrane. It carries out the reaction NH4(+)(in) = NH4(+)(out). It catalyses the reaction methylamine(out) = methylamine(in). The enzyme catalyses CO2(out) = CO2(in). Its function is as follows. Ammonium transporter involved in the maintenance of acid-base homeostasis. Transports ammonium and its related derivative methylammonium across the plasma membrane of epithelial cells likely contributing to renal transepithelial ammonia transport and ammonia metabolism. Postulated to primarily mediate an electroneutral bidirectional transport of NH3 ammonia species according to a mechanism that implies interaction of an NH4(+) ion with acidic residues of the pore entry followed by dissociation of NH4(+) into NH3 and H(+). As a result NH3 transits through the central pore and is protonated on the extracellular side reforming NH4(+). May act as a CO2 channel providing for renal acid secretion. The polypeptide is Ammonium transporter Rh type C (Rhcg) (Rattus norvegicus (Rat)).